A 252-amino-acid chain; its full sequence is Trans-aconitate 2-methyltransferase (252 aa).

Belongs to the methyltransferase superfamily. Tam family.

The protein resides in the cytoplasm. It carries out the reaction trans-aconitate + S-adenosyl-L-methionine = (E)-3-(methoxycarbonyl)pent-2-enedioate + S-adenosyl-L-homocysteine. In terms of biological role, catalyzes the S-adenosylmethionine monomethyl esterification of trans-aconitate. The chain is Trans-aconitate 2-methyltransferase from Escherichia coli O139:H28 (strain E24377A / ETEC).